The sequence spans 753 residues: Inactive protein-tyrosine phosphatase egg-5 (753 aa).

Disordered regions lie at residues 26 to 46 and 77 to 116; these read TSLQ…STDN and RKKV…YAAP. Residues 35–46 show a composition bias toward low complexity; it reads NTDDSSADSTDN. A compositionally biased stretch (basic and acidic residues) spans 84-94; it reads AQKDRRSKERL. One can recognise a Tyrosine-protein phosphatase domain in the interval 408–661; it reads MERRFEILEN…IFVHRLVAFF (254 aa).

This sequence belongs to the protein-tyrosine phosphatase family. In terms of assembly, part of a complex, consisting of pseudophosphatases egg-3, egg-4, egg-5 and kinase mbk-2; this complex is required for the oocyte-to-zygote transition. Interacts (via tyrosine-protein phosphatase domain) with kinase mbk-2 (via 'Tyr-619' and 'Tyr-621'); mbk-2 tyrosine phosphorylation enhances the interaction.

The protein resides in the cytoplasm. The protein localises to the cell cortex. Functionally, inactive phosphatase which acts redundantly with egg-4 in the oocyte-to-zygote transition. Required for polarized cortical actin cytoskeleton rearrangement in the oocyte before and after fertilization. Together with egg-4, required for the cortical localization of kinase mbk-2 in maturing oocyte until the end of meiosis I. Also required for kinase mbk-2, pseudophosphatase egg-3 and chitin synthase chs-1 localization to cytoplasmic foci after fertilization. The polypeptide is Inactive protein-tyrosine phosphatase egg-5 (Caenorhabditis elegans).